The chain runs to 447 residues: Exodeoxyribonuclease 7 large subunit (447 aa).

Belongs to the XseA family. Heterooligomer composed of large and small subunits.

It is found in the cytoplasm. It carries out the reaction Exonucleolytic cleavage in either 5'- to 3'- or 3'- to 5'-direction to yield nucleoside 5'-phosphates.. Functionally, bidirectionally degrades single-stranded DNA into large acid-insoluble oligonucleotides, which are then degraded further into small acid-soluble oligonucleotides. The chain is Exodeoxyribonuclease 7 large subunit from Lactiplantibacillus plantarum (strain ATCC BAA-793 / NCIMB 8826 / WCFS1) (Lactobacillus plantarum).